An 857-amino-acid chain; its full sequence is Protein translocase subunit SecA (857 aa).

ATP contacts are provided by residues Gln88, 106–110 (GEGKT), and Asp496. Zn(2+) contacts are provided by Cys833, Cys835, Cys844, and Cys845.

Belongs to the SecA family. In terms of assembly, monomer and homodimer. Part of the essential Sec protein translocation apparatus which comprises SecA, SecYEG and auxiliary proteins SecDF-YajC and YidC. Requires Zn(2+) as cofactor.

The protein resides in the cell inner membrane. The protein localises to the cytoplasm. The enzyme catalyses ATP + H2O + cellular proteinSide 1 = ADP + phosphate + cellular proteinSide 2.. In terms of biological role, part of the Sec protein translocase complex. Interacts with the SecYEG preprotein conducting channel. Has a central role in coupling the hydrolysis of ATP to the transfer of proteins into and across the cell membrane, serving as an ATP-driven molecular motor driving the stepwise translocation of polypeptide chains across the membrane. This Sulfurimonas denitrificans (strain ATCC 33889 / DSM 1251) (Thiomicrospira denitrificans (strain ATCC 33889 / DSM 1251)) protein is Protein translocase subunit SecA.